The following is a 335-amino-acid chain: Tetraacyldisaccharide 4'-kinase (335 aa).

T58–T65 is a binding site for ATP.

The protein belongs to the LpxK family.

The catalysed reaction is a lipid A disaccharide + ATP = a lipid IVA + ADP + H(+). Its pathway is glycolipid biosynthesis; lipid IV(A) biosynthesis; lipid IV(A) from (3R)-3-hydroxytetradecanoyl-[acyl-carrier-protein] and UDP-N-acetyl-alpha-D-glucosamine: step 6/6. Transfers the gamma-phosphate of ATP to the 4'-position of a tetraacyldisaccharide 1-phosphate intermediate (termed DS-1-P) to form tetraacyldisaccharide 1,4'-bis-phosphate (lipid IVA). This chain is Tetraacyldisaccharide 4'-kinase, found in Shewanella sp. (strain MR-4).